We begin with the raw amino-acid sequence, 179 residues long: Inner membrane-spanning protein YciB (179 aa).

The next 5 membrane-spanning stretches (helical) occupy residues 3 to 23, 49 to 69, 76 to 96, 119 to 139, and 149 to 169; these read FLYDLFPVILFFIVYKLFGIY, NALIMSGVIIVVFGGATLWLQ, WKPTILYWVFTVGLLGSQWLF, LNLAWAIFFLLLGFLNLYVAY, and FKLFGTMGLMFVFVIGQTLLL.

Belongs to the YciB family.

Its subcellular location is the cell inner membrane. Its function is as follows. Plays a role in cell envelope biogenesis, maintenance of cell envelope integrity and membrane homeostasis. In Methylobacillus flagellatus (strain ATCC 51484 / DSM 6875 / VKM B-1610 / KT), this protein is Inner membrane-spanning protein YciB.